A 198-amino-acid polypeptide reads, in one-letter code: Protein GrpE (198 aa).

Belongs to the GrpE family. As to quaternary structure, homodimer.

It localises to the cytoplasm. Functionally, participates actively in the response to hyperosmotic and heat shock by preventing the aggregation of stress-denatured proteins, in association with DnaK and GrpE. It is the nucleotide exchange factor for DnaK and may function as a thermosensor. Unfolded proteins bind initially to DnaJ; upon interaction with the DnaJ-bound protein, DnaK hydrolyzes its bound ATP, resulting in the formation of a stable complex. GrpE releases ADP from DnaK; ATP binding to DnaK triggers the release of the substrate protein, thus completing the reaction cycle. Several rounds of ATP-dependent interactions between DnaJ, DnaK and GrpE are required for fully efficient folding. The chain is Protein GrpE from Lysinibacillus sphaericus (Bacillus sphaericus).